Reading from the N-terminus, the 160-residue chain is Transcriptional regulator MraZ (160 aa).

SpoVT-AbrB domains are found at residues 5–51 and 80–123; these read TFEK…GKAL and MAKL…EREA.

This sequence belongs to the MraZ family. As to quaternary structure, forms oligomers.

Its subcellular location is the cytoplasm. The protein resides in the nucleoid. In Phenylobacterium zucineum (strain HLK1), this protein is Transcriptional regulator MraZ.